We begin with the raw amino-acid sequence, 147 residues long: D-aminoacyl-tRNA deacylase (147 aa).

Positions 139 to 140 (GP) match the Gly-cisPro motif, important for rejection of L-amino acids motif.

This sequence belongs to the DTD family. As to quaternary structure, homodimer.

Its subcellular location is the cytoplasm. The catalysed reaction is glycyl-tRNA(Ala) + H2O = tRNA(Ala) + glycine + H(+). The enzyme catalyses a D-aminoacyl-tRNA + H2O = a tRNA + a D-alpha-amino acid + H(+). In terms of biological role, an aminoacyl-tRNA editing enzyme that deacylates mischarged D-aminoacyl-tRNAs. Also deacylates mischarged glycyl-tRNA(Ala), protecting cells against glycine mischarging by AlaRS. Acts via tRNA-based rather than protein-based catalysis; rejects L-amino acids rather than detecting D-amino acids in the active site. By recycling D-aminoacyl-tRNA to D-amino acids and free tRNA molecules, this enzyme counteracts the toxicity associated with the formation of D-aminoacyl-tRNA entities in vivo and helps enforce protein L-homochirality. This is D-aminoacyl-tRNA deacylase from Rippkaea orientalis (strain PCC 8801 / RF-1) (Cyanothece sp. (strain PCC 8801)).